The chain runs to 660 residues: MRPRAVLLLLFVLLPMLPAPPAGQPSGRRRGRRNGGAGGGFWGDRVDSQPFALPYIHPTNPFAADVVSQPGAGARPRQPPRPLGSAWRDQSQRPSTAPRRRSAPAGAAPLTAVSPAPDTAPVPDVDSRGAILRRQYNLSTSPLTSSVAAGTNLVLYAAPLNPLLPLQDGTNTHIMATEASNYAQYRVVRATIRYRPLVPNAVGGYAISISFWPQTTTTPTSVDMNSITSTDVRILVQPGIASELVIPSERLHYRNQGWRSVETTGVAEEEATSGLVMLCIHGSPVNSYTNTPYTGALGLLDFALELEFRNLTPGNTNTRVSRYTSTARHRLRRGADGTAELTTTAATRFMKDLHFTGTNGVGEVGRGIALTLFNLADTLLGGLPTELISSAGGQLFYSRPVVSANGEPTVKLYTSVENAQQDKGITIPHDIDLGDSRVVIQDYDNQHEQDRPTPSPAPSRPFSVLRANDVLWLSLTAAEYDQTTYGSSTNPMYVSDTVTLVNVATGAQAVARSLDWSKVTLDGRPLTTIQQYSKTFYVLPLRGKLSFWEAGTTKAGYPYNYNTTASDQILIENAAGHRVAISTYTTSLGAGPTSISAVGVLAPHSALAVLEDTVDYPARAHTFDDFCPECRTLGLQGCAFQSTIAELQRLKMKVGKTRES.

The first 23 residues, 1 to 23 (MRPRAVLLLLFVLLPMLPAPPAG), serve as a signal peptide directing secretion. Disordered stretches follow at residues 19 to 43 (APPAGQPSGRRRGRRNGGAGGGFWG) and 64 to 125 (ADVV…VPDV). The Nuclear localization signal signature appears at 28–33 (RRRGRR). Residues 93-124 (RPSTAPRRRSAPAGAAPLTAVSPAPDTAPVPD) show a composition bias toward low complexity. 2 N-linked (GlcNAc...) asparagine; by host glycosylation sites follow: N137 and N310. The particle formation stretch occupies residues 368–394 (IALTLFNLADTLLGGLPTELISSAGGQ). N562 carries N-linked (GlcNAc...) asparagine; by host glycosylation. The tract at residues 585–610 (TTSLGAGPTSISAVGVLAPHSALAVL) is oligomerization.

It belongs to the hepevirus capsid protein family. Homodimer. As to quaternary structure, self-assembles to form the capsid. The capsid is dominated by dimers that define the 30 morphological units. Interacts with phosphorylated protein ORF3. Interacts with host TMEM134. Interacts with host ASGR1 and ASGR2; these interactions facilitate infection of host hepatocytes. Cleaved by host protease in the N-terminus. Post-translationally, N-glycosylated. In terms of processing, not N-glycosylated. The C-terminus of the capsid protein ORF2 is truncated in non-enveloped virions shedded in feces, probably due to host proteases.

The protein resides in the secreted. Its subcellular location is the virion. It is found in the host cytoplasm. It localises to the host endoplasmic reticulum. The protein localises to the host Golgi apparatus. The protein resides in the host cell surface. Its subcellular location is the host nucleus. Its function is as follows. Plays a role in the inhibition of host antibody-mediated neutralization without blocking viral cell entry. In terms of biological role, forms an icosahedral capsid with a T=1 symmetry and a 34 nm diameter. The capsid is composed of 60 copies linked to each other. Binds to the 5' end of the genomic RNA to mediate genome encapsidation. Binds to heparin surface proteoglycans (HSPGs) to mediate viral entry. Additionally, the interactions with host ASGR1 and ASGR2 facilitate viral infection of hepatocytes. Inhibits IFN production by blocking host TBK1-induced IRF3 phosphorylation. The nuclear form probably modulates host gene expression. This chain is Pro-secreted protein ORF2, found in Hepatitis E virus genotype 3 (isolate Swine/United States/swUS1) (HEV-3).